Reading from the N-terminus, the 821-residue chain is TORTIFOLIA1-like protein 1 (821 aa).

5 HEAT repeats span residues proline 69 to aspartate 110, serine 114 to lysine 151, serine 163 to glutamate 201, alanine 205 to isoleucine 242, and glutamine 245 to serine 282. Serine 406 carries the post-translational modification Phosphoserine. Disordered regions lie at residues proline 416–valine 437 and methionine 553–aspartate 610. The stretch at proline 501–serine 554 forms a coiled coil. Residues tyrosine 579–threonine 590 are compositionally biased toward polar residues.

In terms of tissue distribution, expressed at low levels in roots, hypocotyls, stems, flowers, siliques, cotyledons, and leaves. Particularly present in hydathodes of cotyledons and root hairs.

It localises to the cytoplasm. The protein localises to the cytoskeleton. Plant-specific microtubule-associated protein (MAP) that regulates the orientation of cortical microtubules and the direction of organ growth. This chain is TORTIFOLIA1-like protein 1, found in Arabidopsis thaliana (Mouse-ear cress).